Here is a 265-residue protein sequence, read N- to C-terminus: uncharacterized protein (265 aa).

Residues 1-21 (MAFNNSTIIIIIVIAFAFFLI) traverse the membrane as a helical segment. N-linked (GlcNAc...) asparagine; by host glycans are attached at residues N74 and N142.

The protein resides in the host membrane. The protein localises to the virion. This is an uncharacterized protein from Acanthamoeba polyphaga mimivirus (APMV).